The primary structure comprises 362 residues: RING finger protein 32 (362 aa).

The RING-type 1; atypical zinc-finger motif lies at 127-169; it reads CPICKEEFELRPQVLLSCSHVFHRACLQAFEKFTNKKTCPLCR. In terms of domain architecture, IQ spans 186-215; the sequence is RIKCVTRIQAYWRGYVVRKWYRNLRETVPP. An RING-type 2; atypical zinc finger spans residues 293–352; sequence CSICLAPLSPAGGQRVGAGQRSRETALLSCSHVFHHACLLALEEFSVGDRPPFHACPLCR.

Its subcellular location is the cytoplasm. Its function is as follows. May play a role in sperm formation. The sequence is that of RING finger protein 32 (RNF32) from Macaca fascicularis (Crab-eating macaque).